A 292-amino-acid polypeptide reads, in one-letter code: tRNA pseudouridine synthase B (292 aa).

Residue Asp40 is the Nucleophile of the active site.

Belongs to the pseudouridine synthase TruB family. Type 1 subfamily.

The enzyme catalyses uridine(55) in tRNA = pseudouridine(55) in tRNA. Responsible for synthesis of pseudouridine from uracil-55 in the psi GC loop of transfer RNAs. The sequence is that of tRNA pseudouridine synthase B from Mycoplasma capricolum subsp. capricolum (strain California kid / ATCC 27343 / NCTC 10154).